The primary structure comprises 21 residues: 78 kDa dihydrolipoyllysine-residue acetyltransferase component of pyruvate dehydrogenase complex (21 aa).

It belongs to the 2-oxoacid dehydrogenase family. Forms a 60-polypeptide structural core. It depends on (R)-lipoate as a cofactor.

Its subcellular location is the mitochondrion matrix. The enzyme catalyses N(6)-[(R)-dihydrolipoyl]-L-lysyl-[protein] + acetyl-CoA = N(6)-[(R)-S(8)-acetyldihydrolipoyl]-L-lysyl-[protein] + CoA. In terms of biological role, the pyruvate dehydrogenase complex catalyzes the overall conversion of pyruvate to acetyl-CoA and CO(2). It contains multiple copies of three enzymatic components: pyruvate dehydrogenase (E1), dihydrolipoamide acetyltransferase (E2) and lipoamide dehydrogenase (E3). The polypeptide is 78 kDa dihydrolipoyllysine-residue acetyltransferase component of pyruvate dehydrogenase complex (Solanum tuberosum (Potato)).